The chain runs to 545 residues: Monocarboxylate transporter 8 (545 aa).

Positions 1–98 (MALPSPASEE…VETRGTARGF (98 aa)) are disordered. N-acetylalanine is present on Ala-2. Residues 2-102 (ALPSPASEEA…GTARGFQPPE (101 aa)) lie on the Cytoplasmic side of the membrane. Tandem repeats lie at residues 29–50 (PVPE…PVPV) and 51–72 (PPPE…PLPE). The tract at residues 29-72 (PVPEPEPEPEPEPEPDPEPVPVPPPEPQPEPEPQPLPDPAPLPE) is 2 X 22 AA approximate tandem repeats. Over residues 33–45 (PEPEPEPEPEPDP) the composition is skewed to acidic residues. A compositionally biased stretch (pro residues) spans 46 to 70 (EPVPVPPPEPQPEPEPQPLPDPAPL). The chain crosses the membrane as a helical span at residues 103–123 (GGFGWIVVFAATWCNGSIFGI). Residues 124-149 (HNSVGILYSMLLEEEKEKNRQVEFQA) are Extracellular-facing. Residues 150-170 (AWVGALAMGMIFFCSPIVSIF) form a helical membrane-spanning segment. The Cytoplasmic portion of the chain corresponds to 171–177 (TDRLGCR). Residues 178–198 (ITATTGAAVAFIGLHTSSFTS) form a helical membrane-spanning segment. At 199 to 206 (SLSLRYFT) the chain is on the extracellular side. Residues 207–227 (YGILFGCGCSFAFQPSLVILG) form a helical membrane-spanning segment. Residues 228-235 (HYFQRRLG) lie on the Cytoplasmic side of the membrane. A helical transmembrane segment spans residues 236–256 (LANGVVSAGSSIFSMSFPFLI). Over 257–264 (KMLGDKIK) the chain is Extracellular. Residues 265-285 (LAQTFQVLSTFMFVLTLLSLT) traverse the membrane as a helical segment. The Cytoplasmic segment spans residues 286–328 (YRPLLPSSQDTPSKRGAHTLRQRFLVQFRKYFNMRVFRQRTYR). The helical transmembrane segment at 329–349 (IWAFGIAAAALGYFVPYVHLM) threads the bilayer. The Extracellular segment spans residues 350-362 (KYVEDKFKEIKET). The helical transmembrane segment at 363–383 (WVLLVCIGATSGLGRLVSGHI) threads the bilayer. Residues 384–392 (SDSIPGLKK) are Cytoplasmic-facing. Residues 393-413 (IYLQVLSFLLLGLMSMMIPLC) form a helical membrane-spanning segment. The Extracellular segment spans residues 414–415 (RD). Residues 416-436 (FGGLIVVCLFLGLCDGFFITI) traverse the membrane as a helical segment. Residues 437 to 453 (MAPIAFELVGPMQASQA) are Cytoplasmic-facing. Residues 454–474 (IGYLLGMMALPMIAGPPIAGL) traverse the membrane as a helical segment. The Extracellular portion of the chain corresponds to 475–483 (LRNCFGDYH). The chain crosses the membrane as a helical span at residues 484-504 (VAFYFAGVPPIIGAVILFFVP). At 505-545 (LMHQRMFKKEQRDSSKDKMLSHDPDPNGELLPGSPTPEEPI) the chain is on the cytoplasmic side. A compositionally biased stretch (basic and acidic residues) spans 514–529 (EQRDSSKDKMLSHDPD). The disordered stretch occupies residues 514–545 (EQRDSSKDKMLSHDPDPNGELLPGSPTPEEPI). At Thr-540 the chain carries Phosphothreonine.

The protein belongs to the major facilitator superfamily. Monocarboxylate porter (TC 2.A.1.13) family. As to quaternary structure, monomer. Homodimer. Homooligomer. In terms of tissue distribution, expressed in cerebral microvessels.

It localises to the cell membrane. Its subcellular location is the apical cell membrane. It carries out the reaction 3,3',5-triiodo-L-thyronine(out) = 3,3',5-triiodo-L-thyronine(in). It catalyses the reaction 3,3',5'-triiodo-L-thyronine(out) = 3,3',5'-triiodo-L-thyronine(in). The catalysed reaction is L-thyroxine(out) = L-thyroxine(in). The enzyme catalyses 3,3'-diiodo-L-thyronine(out) = 3,3'-diiodo-L-thyronine(in). Functionally, specific thyroid hormone transmembrane transporter, that mediates both uptake and efflux of thyroid hormones across the cell membrane independently of pH or a Na(+) gradient. Major substrates are the iodothyronines T3 and T4 and to a lesser extent rT3 and 3,3-diiodothyronine (3,3'-T2). Acts as an important mediator of thyroid hormone transport, especially T3, through the blood-brain barrier. In Mus musculus (Mouse), this protein is Monocarboxylate transporter 8 (Slc16a2).